Consider the following 315-residue polypeptide: Type II methyltransferase M.Bsp6I (315 aa).

Positions 2 to 315 (LQIASLFAGV…IAENIYKSML (314 aa)) constitute an SAM-dependent MTase C5-type domain. Residue C73 is part of the active site.

It belongs to the class I-like SAM-binding methyltransferase superfamily. C5-methyltransferase family.

The catalysed reaction is a 2'-deoxycytidine in DNA + S-adenosyl-L-methionine = a 5-methyl-2'-deoxycytidine in DNA + S-adenosyl-L-homocysteine + H(+). Its function is as follows. A methylase that recognizes the double-stranded sequence 5'-GCNGC-3', methylates C-? on both strands, and protects the DNA from cleavage by the Bsp6I endonuclease. The protein is Type II methyltransferase M.Bsp6I of Bacillus sp. (strain RFL6).